Reading from the N-terminus, the 602-residue chain is Alpha-glucosides permease MPH3 (602 aa).

At 1–106 the chain is on the cytoplasmic side; it reads MKNLSFLINR…AAAWSLLVST (106 aa). The chain crosses the membrane as a helical span at residues 107 to 127; the sequence is TLIMEGYDTAILGAFYALPIF. The Extracellular segment spans residues 128-142; sequence QRKFGSQNDKTGEWE. Residues 143 to 163 form a helical membrane-spanning segment; it reads ISASWQIGLTLCYMAGEIVGL. Residues 164–178 are Cytoplasmic-facing; that stretch reads QLTGPSVDLVGNRYT. Residues 179-199 traverse the membrane as a helical segment; sequence LIIALFFLAAFTFILYFCNSL. G200 is a topological domain (extracellular). The helical transmembrane segment at 201 to 221 threads the bilayer; sequence MIAVGQALCGMPWGCFQCLTV. Residues 222–234 are Cytoplasmic-facing; that stretch reads SYASEICPLALRY. A helical transmembrane segment spans residues 235–255; that stretch reads YLTTYSNLCWLFGQLFAAGIM. Residues 256–270 lie on the Extracellular side of the membrane; that stretch reads KNSQKKYADSELGYK. A helical membrane pass occupies residues 271-291; the sequence is LPFALQWILPVPLALGIFFAP. At 292-363 the chain is on the cytoplasmic side; sequence ESPWWLVKKG…EDKINRRRTR (72 aa). Residues 364-384 traverse the membrane as a helical segment; sequence ITCLCWAGQATCGSILIGYST. Over 385-397 the chain is Extracellular; that stretch reads YFYEKAGVSTEMS. Residues 398 to 418 traverse the membrane as a helical segment; it reads FTFSIIQYCLGICATFLSWWA. Residues 419–426 are Cytoplasmic-facing; the sequence is SKYFGRYD. A helical transmembrane segment spans residues 427–447; sequence LYAFGLAFQTIVFFIIGGLGC. The Extracellular segment spans residues 448 to 459; sequence SSTHGSKMGSGS. The chain crosses the membrane as a helical span at residues 460–480; the sequence is LLMAVAFFYNLGIAPVVFCLV. Residues 481 to 492 lie on the Cytoplasmic side of the membrane; it reads SEMPSSRLRTKT. A helical transmembrane segment spans residues 493-513; sequence IILARNTYNVVSIICSVLILY. Topologically, residues 514–525 are extracellular; it reads QLNSKKWNWGAK. A helical transmembrane segment spans residues 526–546; that stretch reads SGFFWGVLCFCTLIWAVVDLP. Residues 547 to 602 are Cytoplasmic-facing; sequence ETAGKTFVEINELFKLGVSARKFKSTKVDPFVVKNTPKYVSHNDPKGDIEASIAEE.

The protein belongs to the major facilitator superfamily. Sugar transporter (TC 2.A.1.1) family.

It localises to the cell membrane. In terms of biological role, high-affinity uptake of maltose and maltotriose. Also transports alpha-methylglucoside, glucose and turanose but not melezitose or trehalose. This is Alpha-glucosides permease MPH3 (MPH3) from Saccharomyces cerevisiae (strain YJM789) (Baker's yeast).